Here is a 293-residue protein sequence, read N- to C-terminus: Acetylglutamate kinase (293 aa).

Substrate is bound by residues glycine 60–glycine 61, arginine 82, and asparagine 188.

The protein belongs to the acetylglutamate kinase family. ArgB subfamily.

The protein resides in the cytoplasm. It catalyses the reaction N-acetyl-L-glutamate + ATP = N-acetyl-L-glutamyl 5-phosphate + ADP. It participates in amino-acid biosynthesis; L-arginine biosynthesis; N(2)-acetyl-L-ornithine from L-glutamate: step 2/4. Catalyzes the ATP-dependent phosphorylation of N-acetyl-L-glutamate. The chain is Acetylglutamate kinase from Methanothermobacter thermautotrophicus (strain ATCC 29096 / DSM 1053 / JCM 10044 / NBRC 100330 / Delta H) (Methanobacterium thermoautotrophicum).